The sequence spans 189 residues: MSIKSDRWIKRMAEQHAMIEPFEPGQIKHDAAGQRIVSFGTSSYGYDVRCSREFKVFTNINSTIVDPKHFDPGSFVDIESDVCIIPPNSFALARTVEYFRIPRDTLVVCLGKSTYARCGIIVNVTPLEPEWEGHVTLEFSNTTPLPARIYANEGVAQMLFFQSDEVCETSYKDRGGKYQGQTGVTLPRT.

DCTP is bound by residues 112 to 117 (KSTYAR), 136 to 138 (TLE), Gln157, Tyr171, and Gln181. The Proton donor/acceptor role is filled by Glu138.

It belongs to the dCTP deaminase family. Homotrimer.

It catalyses the reaction dCTP + H2O + H(+) = dUTP + NH4(+). Its pathway is pyrimidine metabolism; dUMP biosynthesis; dUMP from dCTP (dUTP route): step 1/2. Catalyzes the deamination of dCTP to dUTP. This is dCTP deaminase from Xanthomonas axonopodis pv. citri (strain 306).